The sequence spans 89 residues: Long neurotoxin homolog NTL2 (89 aa).

An N-terminal signal peptide occupies residues 1 to 21 (MKTLLLSLVVVIIVCLDLGYT). 5 cysteine pairs are disulfide-bonded: cysteine 24–cysteine 45, cysteine 27–cysteine 32, cysteine 38–cysteine 66, cysteine 70–cysteine 81, and cysteine 82–cysteine 87. The short motif at 54–56 (RGD) is the Cell attachment site element.

The protein belongs to the three-finger toxin family. Ancestral subfamily. Orphan group V sub-subfamily. In terms of tissue distribution, expressed by the venom gland.

The protein localises to the secreted. Its function is as follows. Exhibits M2 muscarinic acetylcholine receptor (CHRM2)-blocking activity, but has a weak binding activity toward nicotinic AChR. Moreover, it inhibits collagen-induced platelet aggregation. This Bungarus multicinctus (Many-banded krait) protein is Long neurotoxin homolog NTL2.